Reading from the N-terminus, the 180-residue chain is Large ribosomal subunit protein uL5 (180 aa).

The protein belongs to the universal ribosomal protein uL5 family. Part of the 50S ribosomal subunit; part of the 5S rRNA/L5/L18/L25 subcomplex. Contacts the 5S rRNA and the P site tRNA. Forms a bridge to the 30S subunit in the 70S ribosome.

Its function is as follows. This is one of the proteins that bind and probably mediate the attachment of the 5S RNA into the large ribosomal subunit, where it forms part of the central protuberance. In the 70S ribosome it contacts protein S13 of the 30S subunit (bridge B1b), connecting the 2 subunits; this bridge is implicated in subunit movement. Contacts the P site tRNA; the 5S rRNA and some of its associated proteins might help stabilize positioning of ribosome-bound tRNAs. The chain is Large ribosomal subunit protein uL5 from Streptococcus pyogenes serotype M1.